We begin with the raw amino-acid sequence, 121 residues long: Small ribosomal subunit protein uS13 (121 aa).

The tract at residues 96–121 (PVRGQNTKNNARTRKGKAVAIAGKKK) is disordered. The segment covering 106–121 (ARTRKGKAVAIAGKKK) has biased composition (basic residues).

Belongs to the universal ribosomal protein uS13 family. In terms of assembly, part of the 30S ribosomal subunit. Forms a loose heterodimer with protein S19. Forms two bridges to the 50S subunit in the 70S ribosome.

In terms of biological role, located at the top of the head of the 30S subunit, it contacts several helices of the 16S rRNA. In the 70S ribosome it contacts the 23S rRNA (bridge B1a) and protein L5 of the 50S subunit (bridge B1b), connecting the 2 subunits; these bridges are implicated in subunit movement. Contacts the tRNAs in the A and P-sites. The chain is Small ribosomal subunit protein uS13 from Streptococcus pyogenes serotype M3 (strain SSI-1).